The chain runs to 242 residues: MPYLKRVLLLLVTGLFMSLFAVTATASAQTGGSFFDPFNGYNSGFWQKADGYSNGNMFNCTWRANNVSMTSLGEMRLALTSPAYNKFDCGENRSVQTYGYGLYEVRMKPAKNTGIVSSFFTYTGPTDGTPWDEIDIEFLGKDTTKVQFNYYTNGAGNHEKIVDLGFDAANAYHTYAFDWQPNSIKWYVDGQLKHTATNQIPTTPGKIMMNLWNGTGVDEWLGSYNGVNPLYAHYDWVRYTKK.

The N-terminal stretch at 1 to 28 (MPYLKRVLLLLVTGLFMSLFAVTATASA) is a signal peptide. Q29 bears the Pyrrolidone carboxylic acid mark. Residues 29–242 (QTGGSFFDPF…HYDWVRYTKK (214 aa)) enclose the GH16 domain. C60 and C89 form a disulfide bridge. E133 serves as the catalytic Nucleophile. E137 (proton donor) is an active-site residue.

Belongs to the glycosyl hydrolase 16 family.

It localises to the secreted. The catalysed reaction is Hydrolysis of (1-&gt;4)-beta-D-glucosidic linkages in beta-D-glucans containing (1-&gt;3)- and (1-&gt;4)-bonds.. The polypeptide is Beta-glucanase (bglS) (Bacillus subtilis (strain 168)).